The following is a 428-amino-acid chain: Putative zinc metalloprotease LL2128 (428 aa).

Residue His-19 participates in Zn(2+) binding. Residue Glu-20 is part of the active site. His-23 is a Zn(2+) binding site. The next 3 membrane-spanning stretches (helical) occupy residues 188 to 210, 354 to 376, and 401 to 423; these read GPLNNFILGIIAFIVLTFVQGGV, IVYLLAMLSINLGIVNLFPIPVL, and IITMVGVVFMLVLFVAVTWNDIL. One can recognise a PDZ domain in the interval 188–282; the sequence is GPLNNFILGI…SETLSVTPKK (95 aa).

It belongs to the peptidase M50B family. The cofactor is Zn(2+).

It localises to the cell membrane. This Lactococcus lactis subsp. lactis (strain IL1403) (Streptococcus lactis) protein is Putative zinc metalloprotease LL2128.